Reading from the N-terminus, the 87-residue chain is Small ribosomal subunit protein uS17 (87 aa).

This sequence belongs to the universal ribosomal protein uS17 family. In terms of assembly, part of the 30S ribosomal subunit.

Its function is as follows. One of the primary rRNA binding proteins, it binds specifically to the 5'-end of 16S ribosomal RNA. The sequence is that of Small ribosomal subunit protein uS17 from Bacillus cytotoxicus (strain DSM 22905 / CIP 110041 / 391-98 / NVH 391-98).